A 168-amino-acid chain; its full sequence is 6-pyruvoyl tetrahydrobiopterin synthase (168 aa).

Histidine 19 serves as a coordination point for Zn(2+). The Proton acceptor role is filled by cysteine 38. Histidine 44 and histidine 46 together coordinate Zn(2+). Residues histidine 85 and glutamate 130 each act as charge relay system in the active site. Serine 159 carries the phosphoserine modification. The residue at position 161 (threonine 161) is a Phosphothreonine. Phosphoserine occurs at positions 164, 165, and 167.

Belongs to the PTPS family. Homohexamer formed of two homotrimers in a head to head fashion. Zn(2+) serves as cofactor.

It carries out the reaction 7,8-dihydroneopterin 3'-triphosphate = 6-pyruvoyl-5,6,7,8-tetrahydropterin + triphosphate + H(+). It participates in cofactor biosynthesis; tetrahydrobiopterin biosynthesis; tetrahydrobiopterin from 7,8-dihydroneopterin triphosphate: step 1/3. Functionally, required for pigment and biopterin synthesis. The chain is 6-pyruvoyl tetrahydrobiopterin synthase (pr) from Drosophila melanogaster (Fruit fly).